Reading from the N-terminus, the 264-residue chain is Eukaryotic translation initiation factor 6 (264 aa).

Belongs to the eIF-6 family. As to quaternary structure, monomer. Associates with the 60S ribosomal subunit.

The protein resides in the cytoplasm. It is found in the nucleus. It localises to the nucleolus. Its function is as follows. Binds to the 60S ribosomal subunit and prevents its association with the 40S ribosomal subunit to form the 80S initiation complex in the cytoplasm. May also be involved in ribosome biogenesis. The sequence is that of Eukaryotic translation initiation factor 6 from Toxoplasma gondii (strain ATCC 50861 / VEG).